Consider the following 729-residue polypeptide: Transient receptor potential cation channel subfamily V member 5 (729 aa).

The Cytoplasmic portion of the chain corresponds to 1 to 327 (MGGFLPKAEG…SFKWNKYGRP (327 aa)). ANK repeat units lie at residues 44–74 (ILES…DVRQ), 78–107 (LGET…ELVF), 116–145 (AGQT…SVSA), 162–191 (FGEH…DIRA), 195–228 (LGNT…HGDH), and 239–268 (QGLT…HIQW). A helical membrane pass occupies residues 328–348 (YFCILAALYLLYMICFTTCCV). Residues 349 to 385 (YRPLKFRGGNRTHSRDITILQQKLLQEAYETREDIIR) are Extracellular-facing. The N-linked (GlcNAc...) asparagine glycan is linked to Asn358. A helical transmembrane segment spans residues 386 to 408 (LVGELVSIVGAVIILLLEIPDIF). Residues 409–419 (RVGASRYFGKT) lie on the Cytoplasmic side of the membrane. Residues 420–442 (ILGGPFHVIIITYASLVLVTMVM) form a helical membrane-spanning segment. The Extracellular segment spans residues 443–448 (RLTNTN). The helical transmembrane segment at 449–469 (GEVVPMSFALVLGWCSVMYFT) threads the bilayer. The Cytoplasmic portion of the chain corresponds to 470 to 492 (RGFQMLGPFTIMIQKMIFGDLMR). A helical transmembrane segment spans residues 493-513 (FCWLMAVVILGFASAFYIIFQ). The segment at residues 524 to 544 (YDYPMALFTTFELFLTVIDAP) is an intramembrane region (pore-forming). Asp542 contacts Ca(2+). A helical membrane pass occupies residues 557-577 (IVNFAFTIIATLLMLNLFIAM). At 578–729 (MGDTHWRVAQ…EGDGEEVYHF (152 aa)) the chain is on the cytoplasmic side. The interaction with S100A10 stretch occupies residues 598–602 (VATTV). Residues 650 to 653 (VFKN) are involved in Ca(2+)-dependent inactivation. Over residues 654-665 (SDKEDDQEHPSE) the composition is skewed to basic and acidic residues. Residues 654 to 675 (SDKEDDQEHPSEKQPSGAESGT) form a disordered region. Thr685 carries the post-translational modification Phosphothreonine. Ser689 carries the phosphoserine modification. The tract at residues 700–729 (GWEILRQNTLGHLNLGLNLSEGDGEEVYHF) is involved in Ca(2+)-dependent inactivation.

It belongs to the transient receptor (TC 1.A.4) family. TrpV subfamily. TRPV5 sub-subfamily. As to quaternary structure, homotetramer and probably heterotetramer with TRPV6. Interacts with TRPV6. Interacts with S100A10 and probably with the ANAX2-S100A10 heterotetramer. The interaction with S100A10 is required for the trafficking to the plasma membrane. Interacts with calmodulin. Interacts with BSPRY, which results in its inactivation. In terms of processing, glycosylated. As to expression, expressed at high levels in kidney, small intestine and pancreas, and at lower levels in testis, prostate, placenta, brain, colon and rectum.

It is found in the apical cell membrane. It carries out the reaction Ca(2+)(in) = Ca(2+)(out). Activated by WNK3. Constitutively active calcium selective cation channel thought to be involved in Ca(2+) reabsorption in kidney and intestine. Required for normal Ca(2+) reabsorption in the kidney distal convoluted tubules. The channel is activated by low internal calcium level and the current exhibits an inward rectification. A Ca(2+)-dependent feedback regulation includes fast channel inactivation and slow current decay. Heteromeric assembly with TRPV6 seems to modify channel properties. TRPV5-TRPV6 heteromultimeric concatemers exhibit voltage-dependent gating. This Homo sapiens (Human) protein is Transient receptor potential cation channel subfamily V member 5 (TRPV5).